The chain runs to 529 residues: MKEALSILCLALLVSVSEAEVTKPNSENFIECLRYRTSSENPITDSISIADNTTTFLSSYLSYTKNKRYSSPNFKKLLAIVAAKHVSHVQATVVCAKTNGIQLRIRSGGHDLEGLSYRSSVPFVILDMFNLRSITVNVLSKKAWVQAGATLGELYVKINEASQTLAFPAGVCPTVGVGGHISGGGYGNLMRKFGITVDHVSDAQLIDVNGKLLNRASMGEDLFWAIRGGGGASFGVILSWKINLVKVPKILTVFKVNKTLEQGGTDVLYKWQLVATKFPEDLFMRAWPQIINGAERGDRTIAVVFYAQFLGPADKLLAIMNQRLPELGLRREDCHEMSWFNTTLFWADYPAGTPKSVLLDRPTNPGFFKSKSDYVKKPIPKEGLEKLWKTMFKFNNIVWMQFNPYGGVMDQIPSTATAFPHRKGNMFKVQYSTTWLAANATEISLSMMKELYKVAEPYVSSNPREAFFNYRDIDIGSNPSDETNVDEAKIYGYKYFLGNLKRLMQVKAKYDPENFFKNEQSIPPVRVIE.

The N-terminal stretch at 1-19 is a signal peptide; the sequence is MKEALSILCLALLVSVSEA. Residues C32 and C95 are joined by a disulfide bond. N-linked (GlcNAc...) asparagine glycosylation occurs at N52. Positions 69–247 constitute an FAD-binding PCMH-type domain; sequence YSSPNFKKLL…LSWKINLVKV (179 aa). Positions 110 to 172 form a cross-link, 6-(S-cysteinyl)-8alpha-(pros-histidyl)-FAD (His-Cys); it reads HDLEGLSYRS…QTLAFPAGVC (63 aa). Residues N257, N341, and N439 are each glycosylated (N-linked (GlcNAc...) asparagine).

The protein belongs to the oxygen-dependent FAD-linked oxidoreductase family. It depends on FAD as a cofactor. Post-translationally, the FAD cofactor is bound via a bicovalent 6-S-cysteinyl, 8alpha-N1-histidyl FAD linkage.

It is found in the secreted. Its subcellular location is the cell wall. Probable flavin-dependent oxidoreductase. This Arabidopsis thaliana (Mouse-ear cress) protein is Berberine bridge enzyme-like 7.